Here is a 73-residue protein sequence, read N- to C-terminus: Mitofissin (73 aa).

It belongs to the ?ATG44? family. Homooligomer. Found as homooctamer in solution, but binds to membranes either as a monomer, dimer, or tetramer, not as an octamer.

It localises to the mitochondrion intermembrane space. The protein resides in the vacuole. Functionally, mitochondrial fission factor that acts directly on lipid membranes to drive mitochondrial fission required for mitophagy. Directly binds to lipid membranes and brings about lipid membrane fragility to facilitate membrane fission and engulfment of mitochondria by the phagophore. The protein is Mitofissin of Saccharomyces cerevisiae (strain ATCC 204508 / S288c) (Baker's yeast).